The sequence spans 589 residues: Ubiquilin-1 (589 aa).

A compositionally biased stretch (gly residues) spans 1 to 11 (MAESGESGGPP). Disordered regions lie at residues 1–35 (MAES…AEPK) and 110–145 (NRPQ…ATSN). An N-acetylalanine modification is found at A2. A compositionally biased stretch (low complexity) spans 12-35 (GSQDSAAGAEGAGAPAAAASAEPK). One can recognise a Ubiquitin-like domain in the interval 37–111 (MKVTVKTPKE…VHLVIKTQNR (75 aa)). Residues 110 to 124 (NRPQDHSAQQTNTAG) show a composition bias toward polar residues. Positions 125 to 145 (SNVTTSSTPNSNSTSGSATSN) are enriched in low complexity. Residues 178–428 (QLLSNPEMMV…LNNPLFAGNP (251 aa)) are interaction with UBXN4. STI1 domains lie at 182–210 (NPEM…QLIM) and 212–251 (NPQM…MQEM). The disordered stretch occupies residues 295-371 (PFASLVSNTS…NLVPGVGASM (77 aa)). The segment covering 299–313 (LVSNTSSGEGSQPSR) has biased composition (polar residues). Residues 327 to 360 (QTSQSSSASSGTASTVGGTTGSTASGTSGQSTTA) are compositionally biased toward low complexity. STI1 domains follow at residues 387-434 (NPQL…QEQM) and 438-470 (LPTF…QQGL). The tract at residues 488–520 (LGALGSTGGSSGTNGSNATPSENTSPTAGTTEP) is disordered. The segment covering 489 to 499 (GALGSTGGSSG) has biased composition (gly residues). Polar residues predominate over residues 509-520 (ENTSPTAGTTEP). The region spanning 546-586 (RFQQQLEQLSAMGFLNREANLQALIATGGDINAAIERLLGS) is the UBA domain.

In terms of assembly, monomer and homodimer. Heterodimer with UBQLN2. Binds CD47, NBL1, GABRA1, GABRA2, GABRA3, GABRA6, GABRB1, GABRB2 and GABRB3. Binds UBE3A, BTRC, P4HB and MTOR. Interacts with the proteasome 19S subunit. Interacts (via ubiquitin-like domain) with TREX1; the interaction is direct and may control TREX1 subcellular location. Forms a complex with UBXN4 and VCP. Interacts (via UBA domain) with UBQLN4 (via ubiquitin-like domain). Found in a complex with UBQLN2 and MAP1LC3A/B/C. The monomeric form interacts with PSEN2. The monomeric form interacts with PSEN1. Interacts with ORAI1. Interacts (via UBA domain) with TICAM1. Interacts with EPS15. Interacts (via UBA domain) with UBA52 and (via ubiquitin-like domain) with PSMD3 and PSMD4. Interacts with HERPUD1. Interacts with MAP1LC3A/B/C in the presence of UBQLN4. Interacts (via ubiquitin-like domain) with EPS15 (via UIM domains) and both the ubiquitinated and non-ubiquitinated forms can interact with EPS15. Interacts (via ubiquitin-like domain) with EPS15L1, HGS (via UIM domain) and STAM2 (via UIM domain). Interacts with BCL2L10/BCL-B; in the cytoplasm. As to quaternary structure, monomeric form interacts with PSEN1. Post-translationally, degraded during both macroautophagy and during chaperone-mediated autophagy (CMA). Phosphorylated. In terms of processing, ubiquitinated. Brain (at protein level). Ubiquitous. Highly expressed throughout the brain; detected in neurons and in neuropathological lesions, such as neurofibrillary tangles and Lewy bodies. Highly expressed in heart, placenta, pancreas, lung, liver, skeletal muscle and kidney.

The protein resides in the cytoplasm. It localises to the nucleus. Its subcellular location is the endoplasmic reticulum. The protein localises to the cytoplasmic vesicle. It is found in the autophagosome. The protein resides in the cell membrane. Functionally, plays an important role in the regulation of different protein degradation mechanisms and pathways including ubiquitin-proteasome system (UPS), autophagy and endoplasmic reticulum-associated protein degradation (ERAD) pathway. Mediates the proteasomal targeting of misfolded or accumulated proteins for degradation by binding (via UBA domain) to their polyubiquitin chains and by interacting (via ubiquitin-like domain) with the subunits of the proteasome. Plays a role in the ERAD pathway via its interaction with ER-localized proteins UBXN4, VCP and HERPUD1 and may form a link between the polyubiquitinated ERAD substrates and the proteasome. Involved in the regulation of macroautophagy and autophagosome formation; required for maturation of autophagy-related protein LC3 from the cytosolic form LC3-I to the membrane-bound form LC3-II and may assist in the maturation of autophagosomes to autolysosomes by mediating autophagosome-lysosome fusion. Negatively regulates the TICAM1/TRIF-dependent toll-like receptor signaling pathway by decreasing the abundance of TICAM1 via the autophagic pathway. Promotes the ubiquitination and lysosomal degradation of ORAI1, consequently down-regulating the ORAI1-mediated Ca2+ mobilization. Suppresses the maturation and proteasomal degradation of amyloid beta A4 protein (A4) by stimulating the lysine 63 (K63)-linked polyubiquitination. Delays the maturation of A4 by sequestering it in the Golgi apparatus and preventing its transport to the cell surface for subsequent processing. Ubiquitinates BCL2L10 and thereby stabilizes protein abundance. In terms of biological role, plays a role in unfolded protein response (UPR) by attenuating the induction of UPR-inducible genes, DDTI3/CHOP, HSPA5 and PDIA2 during ER stress. Plays a key role in the regulation of the levels of PSEN1 by targeting its accumulation to aggresomes which may then be removed from cells by autophagocytosis. Plays a role in unfolded protein response (UPR) by attenuating the induction of UPR-inducible genes, DDTI3/CHOP, HSPA5 and PDIA2 during ER stress. This is Ubiquilin-1 (UBQLN1) from Homo sapiens (Human).